Consider the following 134-residue polypeptide: Profilin-2 (134 aa).

Cysteines 13 and 118 form a disulfide. An Involved in PIP2 interaction motif is present at residues 84 to 100; it reads AVIRGKKGSGGITIKKT. At threonine 114 the chain carries Phosphothreonine.

It belongs to the profilin family. As to quaternary structure, occurs in many kinds of cells as a complex with monomeric actin in a 1:1 ratio. In terms of processing, phosphorylated by MAP kinases.

Its subcellular location is the cytoplasm. The protein resides in the cytoskeleton. Functionally, binds to actin and affects the structure of the cytoskeleton. At high concentrations, profilin prevents the polymerization of actin, whereas it enhances it at low concentrations. The chain is Profilin-2 from Olea europaea (Common olive).